A 396-amino-acid polypeptide reads, in one-letter code: Elongation factor Tu (396 aa).

The region spanning 10–206 (KPHCNIGTIG…AVDAYIPQPE (197 aa)) is the tr-type G domain. Positions 19-26 (GHVDHGKT) are G1. 19 to 26 (GHVDHGKT) contacts GTP. Residue Thr26 coordinates Mg(2+). Residues 60-64 (GITIS) form a G2 region. Residues 81-84 (DCPG) form a G3 region. Residues 81–85 (DCPGH) and 136–139 (NKCD) contribute to the GTP site. The G4 stretch occupies residues 136–139 (NKCD). Residues 174-176 (SAL) form a G5 region.

Belongs to the TRAFAC class translation factor GTPase superfamily. Classic translation factor GTPase family. EF-Tu/EF-1A subfamily. In terms of assembly, monomer.

The protein resides in the cytoplasm. The catalysed reaction is GTP + H2O = GDP + phosphate + H(+). GTP hydrolase that promotes the GTP-dependent binding of aminoacyl-tRNA to the A-site of ribosomes during protein biosynthesis. The sequence is that of Elongation factor Tu from Rhodopseudomonas palustris (strain BisB18).